A 629-amino-acid chain; its full sequence is Polyadenylate-binding protein 2 (629 aa).

The span at 1-12 (MAQVQLQGQTPN) shows a compositional bias: polar residues. A disordered region spans residues 1-25 (MAQVQLQGQTPNGSTAAVTSAPATS). The segment covering 13–25 (GSTAAVTSAPATS) has biased composition (low complexity). RRM domains follow at residues 36–114 (TSLY…YSHR), 124–201 (GNIF…PFLR), 215–292 (TNVY…RAQK), and 318–395 (SNLY…IAQR). The segment at 480-507 (PQQQRPGGGRRPGGIQHSQQQNPMMQQQ) is disordered. Residues 492–507 (GGIQHSQQQNPMMQQQ) are compositionally biased toward low complexity. One can recognise a PABC domain in the interval 539–616 (TIGALASNLS…AMDVLRSVAA (78 aa)).

It belongs to the polyadenylate-binding protein type-1 family. In terms of assembly, interacts with eIF-iso4G. Interacts with ERD15/CID1 and CID7. Interacts with Turnip mosaic virus (TuMV) VPg-Pro and RNA-dependent RNA polymerase (RdRp). In terms of tissue distribution, expressed in all organs (at the protein level) but under distinct spatial and temporal regulation within each organ.

The protein resides in the cytoplasm. The protein localises to the nucleus. In terms of biological role, binds the poly(A) tail of mRNA. Appears to be an important mediator of the multiple roles of the poly(A) tail in mRNA biogenesis, stability and translation. In the cytoplasm, affects both translation and mRNA decay. Stimulates translation by interaction with translation initiation factor eIF4G, a subunit of the cap-binding complex eIF4F, bringing the 5'- and 3'-ends of the mRNA in proximity. The formation of this circular mRNP structure appears to be critical for the synergistic effects of the cap and the poly(A) tail in facilitating translation initiation, recycling of ribosomes, and mRNA stability. During infection with potyvirus TuMV, acts as a potential integral component of the viral replicase complex that could play an important role in the regulation of potyviral RNA-dependent RNA polymerase (RdRp). Binds to uridylated mRNAs and determines the size of uridine extensions. Limits uridine extension by URT1, likely by binding to the oligo(A) tail and preventing URT1 access. This is Polyadenylate-binding protein 2 (PAB2) from Arabidopsis thaliana (Mouse-ear cress).